Consider the following 541-residue polypeptide: Molybdate transporter 1 (541 aa).

Helical transmembrane passes span 24-44 (LLLS…PLLL), 58-78 (LLFS…PLPV), 98-118 (TVAA…TGGL), 137-157 (AGMS…GWLW), and 168-188 (GLGE…GLVV). Positions 193–213 (QQQQQQQSGEKPQERRKKRSK) are disordered. 2 helical membrane passes run 214-234 (MPVQ…FAVV) and 287-307 (MAIA…SALA). Positions 317–366 (PQLYADDESSDSPLSPSPSASSSSLSSAPPQTPSAETPKPLSSPTSAEEG) are disordered. The segment covering 327–351 (DSPLSPSPSASSSSLSSAPPQTPSA) has biased composition (low complexity). The next 2 helical transmembrane spans lie at 413–433 (IILL…PGLL) and 435–455 (LLGK…GVEL). The interval 510–541 (TEKGRGGEQGLLGEEEEEEEQGRVDEESPLLR) is disordered.

It belongs to the SLC26A/SulP transporter (TC 2.A.53) family.

The protein resides in the vacuole membrane. Its function is as follows. Exports stored molybdate from the vacuole into the cytosol, making it available for molybdate cofactor (Moco) biosynthesis. Plays a role in molybdate homeostasis as high cytosolic levels of molybdate are toxic to cells. Not required for molybdate import into cells. The chain is Molybdate transporter 1 from Neurospora crassa (strain ATCC 24698 / 74-OR23-1A / CBS 708.71 / DSM 1257 / FGSC 987).